The following is a 194-amino-acid chain: Protein GrpE (194 aa).

Residues Met1–Ser14 show a composition bias toward basic and acidic residues. The disordered stretch occupies residues Met1–Val48. Polar residues predominate over residues Ala24–Ala34.

Belongs to the GrpE family. In terms of assembly, homodimer.

The protein localises to the cytoplasm. Functionally, participates actively in the response to hyperosmotic and heat shock by preventing the aggregation of stress-denatured proteins, in association with DnaK and GrpE. It is the nucleotide exchange factor for DnaK and may function as a thermosensor. Unfolded proteins bind initially to DnaJ; upon interaction with the DnaJ-bound protein, DnaK hydrolyzes its bound ATP, resulting in the formation of a stable complex. GrpE releases ADP from DnaK; ATP binding to DnaK triggers the release of the substrate protein, thus completing the reaction cycle. Several rounds of ATP-dependent interactions between DnaJ, DnaK and GrpE are required for fully efficient folding. The chain is Protein GrpE from Parabacteroides distasonis (strain ATCC 8503 / DSM 20701 / CIP 104284 / JCM 5825 / NCTC 11152).